Here is an 806-residue protein sequence, read N- to C-terminus: Lon protease (806 aa).

Residues 14-207 form the Lon N-terminal domain; it reads YPVLPLRDIV…KALGFMEGEI (194 aa). Position 359–366 (359–366) interacts with ATP; the sequence is GPPGVGKT. Residues 594 to 775 form the Lon proteolytic domain; the sequence is DDQVGVVTGL…GEVIAHALLR (182 aa). Residues S681 and K724 contribute to the active site. The interval 786 to 806 is disordered; that stretch reads SQPAALPSVDSQDEAGTSIAH.

This sequence belongs to the peptidase S16 family. In terms of assembly, homohexamer. Organized in a ring with a central cavity.

It localises to the cytoplasm. The enzyme catalyses Hydrolysis of proteins in presence of ATP.. In terms of biological role, ATP-dependent serine protease that mediates the selective degradation of mutant and abnormal proteins as well as certain short-lived regulatory proteins. Required for cellular homeostasis and for survival from DNA damage and developmental changes induced by stress. Degrades polypeptides processively to yield small peptide fragments that are 5 to 10 amino acids long. Binds to DNA in a double-stranded, site-specific manner. In R.meliloti it is important for controlling the turnover of a constitutively expressed protein(s) that, when unregulated, disrupts normal nodule formation and normal growth. This Rhizobium meliloti (strain 1021) (Ensifer meliloti) protein is Lon protease.